Reading from the N-terminus, the 264-residue chain is Thiazole synthase (264 aa).

The Schiff-base intermediate with DXP role is filled by Lys106. 1-deoxy-D-xylulose 5-phosphate contacts are provided by residues Gly167, 193–194 (AG), and 215–216 (NT).

This sequence belongs to the ThiG family. As to quaternary structure, homotetramer. Forms heterodimers with either ThiH or ThiS.

The protein localises to the cytoplasm. It catalyses the reaction [ThiS sulfur-carrier protein]-C-terminal-Gly-aminoethanethioate + 2-iminoacetate + 1-deoxy-D-xylulose 5-phosphate = [ThiS sulfur-carrier protein]-C-terminal Gly-Gly + 2-[(2R,5Z)-2-carboxy-4-methylthiazol-5(2H)-ylidene]ethyl phosphate + 2 H2O + H(+). It functions in the pathway cofactor biosynthesis; thiamine diphosphate biosynthesis. Functionally, catalyzes the rearrangement of 1-deoxy-D-xylulose 5-phosphate (DXP) to produce the thiazole phosphate moiety of thiamine. Sulfur is provided by the thiocarboxylate moiety of the carrier protein ThiS. In vitro, sulfur can be provided by H(2)S. This Xylella fastidiosa (strain 9a5c) protein is Thiazole synthase.